The sequence spans 318 residues: Quinolinate synthase (318 aa).

Iminosuccinate is bound by residues His-34 and Ser-51. [4Fe-4S] cluster is bound at residue Cys-96. Iminosuccinate is bound by residues 122–124 and Ser-139; that span reads YIN. Cys-182 lines the [4Fe-4S] cluster pocket. Residues 208 to 210 and Thr-225 each bind iminosuccinate; that span reads HPE. Cys-275 is a [4Fe-4S] cluster binding site.

Belongs to the quinolinate synthase family. Type 2 subfamily. It depends on [4Fe-4S] cluster as a cofactor.

The protein localises to the cytoplasm. The enzyme catalyses iminosuccinate + dihydroxyacetone phosphate = quinolinate + phosphate + 2 H2O + H(+). The protein operates within cofactor biosynthesis; NAD(+) biosynthesis; quinolinate from iminoaspartate: step 1/1. Its function is as follows. Catalyzes the condensation of iminoaspartate with dihydroxyacetone phosphate to form quinolinate. This Synechocystis sp. (strain ATCC 27184 / PCC 6803 / Kazusa) protein is Quinolinate synthase.